The primary structure comprises 393 residues: Chorismate synthase (393 aa).

Positions 39 and 45 each coordinate NADP(+). Residues 133–135, 256–257, Gly301, 316–320, and Arg342 contribute to the FMN site; these read RSS, NA, and KPIPT.

This sequence belongs to the chorismate synthase family. Homotetramer. FMNH2 serves as cofactor.

The enzyme catalyses 5-O-(1-carboxyvinyl)-3-phosphoshikimate = chorismate + phosphate. It functions in the pathway metabolic intermediate biosynthesis; chorismate biosynthesis; chorismate from D-erythrose 4-phosphate and phosphoenolpyruvate: step 7/7. Catalyzes the anti-1,4-elimination of the C-3 phosphate and the C-6 proR hydrogen from 5-enolpyruvylshikimate-3-phosphate (EPSP) to yield chorismate, which is the branch point compound that serves as the starting substrate for the three terminal pathways of aromatic amino acid biosynthesis. This reaction introduces a second double bond into the aromatic ring system. The polypeptide is Chorismate synthase (Lysinibacillus sphaericus (strain C3-41)).